The primary structure comprises 150 residues: 16.6 kDa heat shock protein (150 aa).

In terms of domain architecture, sHSP spans 31–150; that stretch reads AERCPVLTNV…PQLKAIPISG (120 aa).

The protein belongs to the small heat shock protein (HSP20) family. As to quaternary structure, may form oligomeric structures.

The protein localises to the cytoplasm. The protein is 16.6 kDa heat shock protein (HSP16.6) of Oryza sativa subsp. japonica (Rice).